A 308-amino-acid polypeptide reads, in one-letter code: UDP-N-acetylenolpyruvoylglucosamine reductase (308 aa).

The region spanning 32–196 (VGGPAARLYK…ISAKLQLSPG (165 aa)) is the FAD-binding PCMH-type domain. The active site involves R176. S225 serves as the catalytic Proton donor. The active site involves E296.

This sequence belongs to the MurB family. The cofactor is FAD.

It localises to the cytoplasm. The catalysed reaction is UDP-N-acetyl-alpha-D-muramate + NADP(+) = UDP-N-acetyl-3-O-(1-carboxyvinyl)-alpha-D-glucosamine + NADPH + H(+). It participates in cell wall biogenesis; peptidoglycan biosynthesis. Its function is as follows. Cell wall formation. This Legionella pneumophila (strain Lens) protein is UDP-N-acetylenolpyruvoylglucosamine reductase.